Consider the following 689-residue polypeptide: Glycine--tRNA ligase beta subunit (689 aa).

This sequence belongs to the class-II aminoacyl-tRNA synthetase family. In terms of assembly, tetramer of two alpha and two beta subunits.

The protein localises to the cytoplasm. It catalyses the reaction tRNA(Gly) + glycine + ATP = glycyl-tRNA(Gly) + AMP + diphosphate. The polypeptide is Glycine--tRNA ligase beta subunit (Acinetobacter baumannii (strain ACICU)).